We begin with the raw amino-acid sequence, 637 residues long: Type II restriction enzyme and methyltransferase RM.BcgI (637 aa).

This sequence in the C-terminal section; belongs to the N(4)/N(6)-methyltransferase family. As to quaternary structure, heterotrimer of two A and one B subunit. Both subunits are necessary for DNA-binding, which is sequence non-specific. Mg(2+) is required as a cofactor.

The enzyme catalyses Endonucleolytic cleavage of DNA to give specific double-stranded fragments with terminal 5'-phosphates.. It carries out the reaction a 2'-deoxyadenosine in DNA + S-adenosyl-L-methionine = an N(6)-methyl-2'-deoxyadenosine in DNA + S-adenosyl-L-homocysteine + H(+). With respect to regulation, DNA restriction requires S-adenosyl-L-methionine and Mg(2+), and is inhibited by S-adenosyl-homocysteine. SAM may be a cofactor for DNA restriction. In terms of biological role, a B, G, H and S subtype restriction enzyme that recognizes the double-stranded sequence 5'-CGAN(6)TGC-3' and cleaves bilaterally and symmetrically 10 base pairs upstream and 12 base pairs downstream of the sequence to release a 34-base pair fragment. Methylation of the recognition sequence occurs on the adenine in either one or both strands; seems to methylate restricted DNA. This subunit has no methylation or DNA restriction activity on its own. The sequence is that of Type II restriction enzyme and methyltransferase RM.BcgI from Heyndrickxia coagulans (Weizmannia coagulans).